The following is a 160-amino-acid chain: SsrA-binding protein (160 aa).

This sequence belongs to the SmpB family.

It is found in the cytoplasm. Required for rescue of stalled ribosomes mediated by trans-translation. Binds to transfer-messenger RNA (tmRNA), required for stable association of tmRNA with ribosomes. tmRNA and SmpB together mimic tRNA shape, replacing the anticodon stem-loop with SmpB. tmRNA is encoded by the ssrA gene; the 2 termini fold to resemble tRNA(Ala) and it encodes a 'tag peptide', a short internal open reading frame. During trans-translation Ala-aminoacylated tmRNA acts like a tRNA, entering the A-site of stalled ribosomes, displacing the stalled mRNA. The ribosome then switches to translate the ORF on the tmRNA; the nascent peptide is terminated with the 'tag peptide' encoded by the tmRNA and targeted for degradation. The ribosome is freed to recommence translation, which seems to be the essential function of trans-translation. The sequence is that of SsrA-binding protein from Escherichia coli O139:H28 (strain E24377A / ETEC).